The chain runs to 486 residues: uncharacterized protein (486 aa).

Residues 18-38 traverse the membrane as a helical segment; sequence TLLQLFVFTVICVFVLSGLAI. Over residues 62–79 the composition is skewed to basic and acidic residues; it reads DRQKQMEKQQDSGEKRSF. 2 disordered regions span residues 62–82 and 117–147; these read DRQKQMEKQQDSGEKRSFEST and IESSSSSDSSSSSSSSNAKNSQGGGQGGPQM. The span at 119 to 132 shows a compositional bias: low complexity; it reads SSSSSDSSSSSSSS. The next 3 membrane-spanning stretches (helical) occupy residues 324 to 344, 365 to 385, and 451 to 471; these read VVYLVSVAGAVILGLIVMMSI, IGQFLTEILIVAVIAIGLASV, and MLILGGIGILIAIIATLLPSI.

It belongs to the ABC-4 integral membrane protein family.

It is found in the cell membrane. This is an uncharacterized protein from Bacillus subtilis (strain 168).